Reading from the N-terminus, the 130-residue chain is Abscisic acid and environmental stress-inducible protein TAS14 (130 aa).

A disordered region spans residues 1-130 (MAQYGNQDQM…KIKDKIPGMH (130 aa)). The span at 27-58 (QGTGTGGMMGGTGTGGMMGGTGGEYGTQGMGT) shows a compositional bias: gly residues. 2 stretches are compositionally biased toward basic and acidic residues: residues 61-73 (HHHEGQQQLRRSD) and 92-130 (KEKIMEKMPGQHEGEYGQTTGEEKKGMMDKIKDKIPGMH).

Belongs to the plant dehydrin family.

The protein is Abscisic acid and environmental stress-inducible protein TAS14 (TAS14) of Solanum lycopersicum (Tomato).